Here is a 153-residue protein sequence, read N- to C-terminus: Small ribosomal subunit protein uS9 (153 aa).

The tract at residues 122–153 (KKAGFLTRDPRSTERKKYGLKKARKAPQYSKR) is disordered. Residues 129 to 138 (RDPRSTERKK) are compositionally biased toward basic and acidic residues. The segment covering 139–153 (YGLKKARKAPQYSKR) has biased composition (basic residues).

Belongs to the universal ribosomal protein uS9 family.

This is Small ribosomal subunit protein uS9 (rpsI) from Mycobacterium leprae (strain TN).